The following is a 220-amino-acid chain: Translation initiation factor 6 (220 aa).

It belongs to the eIF-6 family.

In terms of biological role, binds to the 50S ribosomal subunit and prevents its association with the 30S ribosomal subunit to form the 70S initiation complex. The protein is Translation initiation factor 6 of Pyrobaculum aerophilum (strain ATCC 51768 / DSM 7523 / JCM 9630 / CIP 104966 / NBRC 100827 / IM2).